A 156-amino-acid chain; its full sequence is MLRQLIVSTVGRRMPLQMISQSRLASNLDKTEYTTPGEIVDYDDPPHLPVPEYPVRPDEPLQTRKQRLLYQSRKRGMLENDLLLSTFVAKHLKDFNAEQTAEYDQLINGVSNDWDIFYWATDTKPTPPQFDTEIMRLLKEHVKNHEKVQRIRQPDL.

The transit peptide at 1–24 (MLRQLIVSTVGRRMPLQMISQSRL) directs the protein to the mitochondrion.

Belongs to the SDHAF2 family. In terms of assembly, interacts with the flavoprotein subunit within the SDH catalytic dimer.

The protein localises to the mitochondrion matrix. In terms of biological role, plays an essential role in the assembly of succinate dehydrogenase (SDH), an enzyme complex (also referred to as respiratory complex II) that is a component of both the tricarboxylic acid (TCA) cycle and the mitochondrial electron transport chain, and which couples the oxidation of succinate to fumarate with the reduction of ubiquinone (coenzyme Q) to ubiquinol. Required for flavinylation (covalent attachment of FAD) of the flavoprotein subunit of the SDH catalytic dimer. The polypeptide is Succinate dehydrogenase assembly factor 2-B, mitochondrial (Drosophila erecta (Fruit fly)).